The primary structure comprises 621 residues: Type 2 DNA topoisomerase 6 subunit B (621 aa).

Residues N48, D80, 101–102 (SR), 111–118 (GQQGIGIS), and K435 contribute to the ATP site.

It belongs to the TOP6B family. Homodimer. Heterotetramer of two Top6A and two Top6B chains.

The enzyme catalyses ATP-dependent breakage, passage and rejoining of double-stranded DNA.. Its function is as follows. Relaxes both positive and negative superturns and exhibits a strong decatenase activity. The chain is Type 2 DNA topoisomerase 6 subunit B from Methanosarcina mazei (strain ATCC BAA-159 / DSM 3647 / Goe1 / Go1 / JCM 11833 / OCM 88) (Methanosarcina frisia).